The primary structure comprises 183 residues: Adenine phosphoribosyltransferase (183 aa).

The protein belongs to the purine/pyrimidine phosphoribosyltransferase family. Homodimer.

The protein localises to the cytoplasm. It catalyses the reaction AMP + diphosphate = 5-phospho-alpha-D-ribose 1-diphosphate + adenine. It participates in purine metabolism; AMP biosynthesis via salvage pathway; AMP from adenine: step 1/1. Functionally, catalyzes a salvage reaction resulting in the formation of AMP, that is energically less costly than de novo synthesis. This is Adenine phosphoribosyltransferase from Escherichia fergusonii (strain ATCC 35469 / DSM 13698 / CCUG 18766 / IAM 14443 / JCM 21226 / LMG 7866 / NBRC 102419 / NCTC 12128 / CDC 0568-73).